Consider the following 301-residue polypeptide: Glutamine amidotransferase-like protein GlxB (301 aa).

C2 is an active-site residue. The region spanning 2 to 298 is the Glutamine amidotransferase type-2 domain; the sequence is CGIVGLFLKD…PATVYFWDHQ (297 aa).

The polypeptide is Glutamine amidotransferase-like protein GlxB (glxB) (Rhizobium meliloti (strain 1021) (Ensifer meliloti)).